The primary structure comprises 199 residues: Recombination protein RecR (199 aa).

The C4-type zinc finger occupies 58 to 73 (CKKCFNLTSEEECEIC). Residues 81–175 (KIICVVAETK…KVTRIAYGLP (95 aa)) form the Toprim domain.

The protein belongs to the RecR family.

In terms of biological role, may play a role in DNA repair. It seems to be involved in an RecBC-independent recombinational process of DNA repair. It may act with RecF and RecO. The sequence is that of Recombination protein RecR from Prochlorococcus marinus subsp. pastoris (strain CCMP1986 / NIES-2087 / MED4).